Here is a 286-residue protein sequence, read N- to C-terminus: MEKESHEENNHTISGDLTAKRKRGRPRKQLKLESNEHSLGHSPSFSRSQQQSRQRNDDEAMVGQPISGVIEATFEAGFLLSVKVGNSDSMLRGVVFKPGHCDPVSVDNDVAPDVPMIRRNSDVMHHDGSAKRGRKSRFREKRGSGVRSRALVPVPIQPAHPTIPNNLIVPVVLQPAHLENGGERVPIDHSPMQTETGSQASGASNGKPFETLLTQVMNKGQVQHTTQSVEPESDEQALSIEPLQAIHPIHPVHMLKPMPSYGRGKMTELLQAVQENVRETHFSQGH.

Positions 1–10 (MEKESHEENN) are enriched in basic and acidic residues. 3 disordered regions span residues 1 to 60 (MEKE…DDEA), 123 to 146 (VMHH…GSGV), and 181 to 204 (GGER…SGAS). Residues 20–29 (KRKRGRPRKQ) show a composition bias toward basic residues. Over residues 30–39 (LKLESNEHSL) the composition is skewed to basic and acidic residues. Basic residues predominate over residues 131–140 (KRGRKSRFRE). Residues 191 to 204 (PMQTETGSQASGAS) are compositionally biased toward polar residues.

As to expression, mailny observed in young seedlings and in emerging leaves.

Its function is as follows. Lineage-specific modulator of primary metabolism. Influences flowering time. The sequence is that of Protein METABOLIC NETWORK MODULATOR 1 from Arabidopsis thaliana (Mouse-ear cress).